The sequence spans 459 residues: Endoglucanase CelA (459 aa).

Residues 1–27 (MKRLLALLATGVSIVGLTALAGPPAQA) form the signal peptide. One can recognise a CBM2 domain in the interval 28-134 (ATGCKAEYTI…TLNGATCSGS (107 aa)). Cysteines 31 and 131 form a disulfide. Positions 129-151 (ATCSGSVTDPPTDPPTDPPATGT) are disordered. A linker ('hinge') (Pro-Thr box) region spans residues 136 to 147 (TDPPTDPPTDPP). A catalytic region spans residues 148-357 (ATGTPAAVNG…YAFHFYAASH (210 aa)). E286 (proton donor) is an active-site residue. Catalysis depends on E378, which acts as the Nucleophile.

The protein belongs to the glycosyl hydrolase 5 (cellulase A) family. Post-translationally, the linker region (also termed 'hinge') may be a potential site for proteolysis.

It carries out the reaction Endohydrolysis of (1-&gt;4)-beta-D-glucosidic linkages in cellulose, lichenin and cereal beta-D-glucans.. This chain is Endoglucanase CelA (celA), found in Streptomyces lividans.